Reading from the N-terminus, the 343-residue chain is Anthranilate phosphoribosyltransferase (343 aa).

5-phospho-alpha-D-ribose 1-diphosphate contacts are provided by residues Gly84, 87 to 88 (GD), Thr92, 94 to 97 (NIST), 112 to 120 (KHGNRGVSS), and Ser124. Anthranilate is bound at residue Gly84. Residue Ser96 participates in Mg(2+) binding. An anthranilate-binding site is contributed by Asn115. Arg170 contributes to the anthranilate binding site. 2 residues coordinate Mg(2+): Asp229 and Glu230.

It belongs to the anthranilate phosphoribosyltransferase family. As to quaternary structure, homodimer. Mg(2+) serves as cofactor.

It catalyses the reaction N-(5-phospho-beta-D-ribosyl)anthranilate + diphosphate = 5-phospho-alpha-D-ribose 1-diphosphate + anthranilate. Its pathway is amino-acid biosynthesis; L-tryptophan biosynthesis; L-tryptophan from chorismate: step 2/5. In terms of biological role, catalyzes the transfer of the phosphoribosyl group of 5-phosphorylribose-1-pyrophosphate (PRPP) to anthranilate to yield N-(5'-phosphoribosyl)-anthranilate (PRA). This Burkholderia cenocepacia (strain ATCC BAA-245 / DSM 16553 / LMG 16656 / NCTC 13227 / J2315 / CF5610) (Burkholderia cepacia (strain J2315)) protein is Anthranilate phosphoribosyltransferase.